We begin with the raw amino-acid sequence, 642 residues long: Threonine--tRNA ligase (642 aa).

One can recognise a TGS domain in the interval 1 to 61 (MPVITLPDGS…ETDSTLSIIT (61 aa)). A catalytic region spans residues 243 to 534 (DHRKIGKQLD…LTEEFAGFFP (292 aa)). Zn(2+) is bound by residues cysteine 334, histidine 385, and histidine 511.

It belongs to the class-II aminoacyl-tRNA synthetase family. In terms of assembly, homodimer. Zn(2+) is required as a cofactor.

Its subcellular location is the cytoplasm. It catalyses the reaction tRNA(Thr) + L-threonine + ATP = L-threonyl-tRNA(Thr) + AMP + diphosphate + H(+). Functionally, catalyzes the attachment of threonine to tRNA(Thr) in a two-step reaction: L-threonine is first activated by ATP to form Thr-AMP and then transferred to the acceptor end of tRNA(Thr). Also edits incorrectly charged L-seryl-tRNA(Thr). The chain is Threonine--tRNA ligase from Klebsiella pneumoniae (strain 342).